The following is a 440-amino-acid chain: ATP-dependent protease ATPase subunit HslU (440 aa).

ATP contacts are provided by residues Val18, 60–65 (GVGKTE), Asp253, Glu318, and Arg390.

It belongs to the ClpX chaperone family. HslU subfamily. A double ring-shaped homohexamer of HslV is capped on each side by a ring-shaped HslU homohexamer. The assembly of the HslU/HslV complex is dependent on binding of ATP.

It is found in the cytoplasm. ATPase subunit of a proteasome-like degradation complex; this subunit has chaperone activity. The binding of ATP and its subsequent hydrolysis by HslU are essential for unfolding of protein substrates subsequently hydrolyzed by HslV. HslU recognizes the N-terminal part of its protein substrates and unfolds these before they are guided to HslV for hydrolysis. In Methylococcus capsulatus (strain ATCC 33009 / NCIMB 11132 / Bath), this protein is ATP-dependent protease ATPase subunit HslU.